The chain runs to 492 residues: Heat shock factor protein 4 (492 aa).

The DNA-binding element occupies valine 17–proline 122. Residues serine 129–threonine 203 are hydrophobic repeat HR-A/B. Residues leucine 245–proline 322 are interactions with DUSP26, MAPK1 and MAPK2. The tract at residues serine 263 to glycine 282 is disordered. Residue lysine 293 forms a Glycyl lysine isopeptide (Lys-Gly) (interchain with G-Cter in SUMO) linkage. The residue at position 298 (serine 298) is a Phosphoserine. The segment at glycine 337–proline 378 is disordered. Residues leucine 364–leucine 389 are hydrophobic repeat HR-C.

This sequence belongs to the HSF family. In terms of assembly, homotrimer. Exhibits constitutive DNA binding and forms trimers even in the absence of stress. Interacts with ALKBH4, DUSP26, MAPK1, MAPK2, MAPK8 and MAP kinase p38. Phosphorylated mainly on serine residues. Phosphorylation on Ser-298 promotes sumoylation on Lys-293. Post-translationally, isoform HSF4B is constitutively sumoylated. Sumoylation represses the transcriptional activity and is promoted by phosphorylation on Ser-298. HSFA is not sumoylated. In terms of tissue distribution, preferentially expressed in brain and lung. Also found in the eye. Slightly detected in liver and skeletal muscle. Isoform B is the major species in various tissues.

The protein localises to the nucleus. Its function is as follows. Heat-shock transcription factor that specifically binds heat shock promoter elements (HSE). Required for denucleation and organelle rupture and degradation that occur during eye lens terminal differentiation, when fiber cells that compose the lens degrade all membrane-bound organelles in order to provide lens with transparency to allow the passage of light. In this process, may regulate denucleation of lens fiber cells in part by activating DNASE2B transcription. May be involved in DNA repair through the transcriptional regulation of RAD51. May up-regulate p53/TP53 protein in eye lens fiber cells, possibly through protein stabilization. In the eye lens, controls the expression of alpha-crystallin B chain/CRYAB and consequently may be involved in the regulation of lysosomal acidification. In terms of biological role, transcriptional repressor. Functionally, transcriptional activator. This is Heat shock factor protein 4 (Hsf4) from Mus musculus (Mouse).